The chain runs to 76 residues: Probable small nuclear ribonucleoprotein G (76 aa).

In terms of domain architecture, Sm spans Ala4–Val76.

It belongs to the snRNP Sm proteins family. Interacts with the SMN complex. Core component of the spliceosomal U1, U2, U4 and U5 small nuclear ribonucleoproteins (snRNPs), the building blocks of the spliceosome. Most spliceosomal snRNPs contain a common set of Sm proteins, SNRPB, SNRPD1, SNRPD2, SNRPD3, SNRPE, SNRPF and SNRPG that assemble in a heptameric protein ring on the Sm site of the small nuclear RNA to form the core snRNP. Component of the U1 snRNP. Component of the U4/U6-U5 tri-snRNP complex. Component of the U7 snRNP complex. Component of the U11/U12 snRNPs that are part of the U12-type spliceosome.

The protein resides in the cytoplasm. The protein localises to the cytosol. It is found in the nucleus. In terms of biological role, plays a role in pre-mRNA splicing as a core component of the spliceosomal U1, U2, U4 and U5 small nuclear ribonucleoproteins (snRNPs), the building blocks of the spliceosome. Component of both the pre-catalytic spliceosome B complex and activated spliceosome C complexes. Is also a component of the minor U12 spliceosome. This chain is Probable small nuclear ribonucleoprotein G, found in Drosophila melanogaster (Fruit fly).